The primary structure comprises 258 residues: Acyl-[acyl-carrier-protein]--UDP-N-acetylglucosamine O-acyltransferase (258 aa).

It belongs to the transferase hexapeptide repeat family. LpxA subfamily. Homotrimer.

It localises to the cytoplasm. The enzyme catalyses a (3R)-hydroxyacyl-[ACP] + UDP-N-acetyl-alpha-D-glucosamine = a UDP-3-O-[(3R)-3-hydroxyacyl]-N-acetyl-alpha-D-glucosamine + holo-[ACP]. The protein operates within glycolipid biosynthesis; lipid IV(A) biosynthesis; lipid IV(A) from (3R)-3-hydroxytetradecanoyl-[acyl-carrier-protein] and UDP-N-acetyl-alpha-D-glucosamine: step 1/6. Its function is as follows. Involved in the biosynthesis of lipid A, a phosphorylated glycolipid that anchors the lipopolysaccharide to the outer membrane of the cell. The polypeptide is Acyl-[acyl-carrier-protein]--UDP-N-acetylglucosamine O-acyltransferase (Thiobacillus denitrificans (strain ATCC 25259 / T1)).